A 235-amino-acid polypeptide reads, in one-letter code: LexA repressor (235 aa).

Residues 47-67 (IREIADAVGLTSTSSVAHQLR) constitute a DNA-binding region (H-T-H motif). Active-site for autocatalytic cleavage activity residues include Ser-159 and Lys-196.

This sequence belongs to the peptidase S24 family. In terms of assembly, homodimer.

The catalysed reaction is Hydrolysis of Ala-|-Gly bond in repressor LexA.. Represses a number of genes involved in the response to DNA damage (SOS response), including recA and lexA. In the presence of single-stranded DNA, RecA interacts with LexA causing an autocatalytic cleavage which disrupts the DNA-binding part of LexA, leading to derepression of the SOS regulon and eventually DNA repair. This Mycobacterium leprae (strain Br4923) protein is LexA repressor.